Here is a 79-residue protein sequence, read N- to C-terminus: Dolichol phosphate-mannose biosynthesis regulatory protein (79 aa).

2 helical membrane passes run 8–28 (IGFVMVLFRIFVFGYYTTWVI) and 50–70 (IIIPLVLLVVGITAIGTFLGL).

Belongs to the DPM2 family. As to quaternary structure, component of the dolichol-phosphate mannose (DPM) synthase complex composed of dpm1, dpm2 and dpm3.

It localises to the endoplasmic reticulum membrane. Its pathway is protein modification; protein glycosylation. In terms of biological role, regulates the biosynthesis of dolichol phosphate-mannose. Regulatory subunit of the dolichol-phosphate mannose (DPM) synthase complex; essential for the ER localization and stable expression of dpm1. This is Dolichol phosphate-mannose biosynthesis regulatory protein (dpm2-1) from Dictyostelium discoideum (Social amoeba).